Reading from the N-terminus, the 125-residue chain is Ribosome-binding factor A (125 aa).

Belongs to the RbfA family. Monomer. Binds 30S ribosomal subunits, but not 50S ribosomal subunits or 70S ribosomes.

It is found in the cytoplasm. Functionally, one of several proteins that assist in the late maturation steps of the functional core of the 30S ribosomal subunit. Associates with free 30S ribosomal subunits (but not with 30S subunits that are part of 70S ribosomes or polysomes). Required for efficient processing of 16S rRNA. May interact with the 5'-terminal helix region of 16S rRNA. The sequence is that of Ribosome-binding factor A from Paracidovorax citrulli (strain AAC00-1) (Acidovorax citrulli).